The following is a 216-amino-acid chain: Protein-L-isoaspartate O-methyltransferase (216 aa).

Ser-60 is an active-site residue.

It belongs to the methyltransferase superfamily. L-isoaspartyl/D-aspartyl protein methyltransferase family.

It is found in the cytoplasm. It carries out the reaction [protein]-L-isoaspartate + S-adenosyl-L-methionine = [protein]-L-isoaspartate alpha-methyl ester + S-adenosyl-L-homocysteine. Functionally, catalyzes the methyl esterification of L-isoaspartyl residues in peptides and proteins that result from spontaneous decomposition of normal L-aspartyl and L-asparaginyl residues. It plays a role in the repair and/or degradation of damaged proteins. This chain is Protein-L-isoaspartate O-methyltransferase, found in Methanococcus aeolicus (strain ATCC BAA-1280 / DSM 17508 / OCM 812 / Nankai-3).